Consider the following 428-residue polypeptide: MYKEPFQPTYEYALECDKHDELKDFQTEFYKKEGTIYLDGNSLGLLSKRAEKSLLTLLDSWKEYGIDGWTEGEHPWFFLSEKLGELTAPLIGALPEESIVTGSTTTNIHQVIATFYEPKGIRTKILADELTFPSDIYALQSQIRLKGLDPDEHLVRVKSRDGRTLSEDDIIQAMTDDIALILLPSVLYRSGQILDMKRLTAEAHERGIHIGFDLCHSIGSIPHHFKEWDVDFAIWCNYKYLNAGPGGVAGLYVNKKHFNRLPGLSGWFSSRKDKQFDMEHTLTAADHAGAYQIGTPHILSTAPLIGSLEIFKDAGIERLREKSLHITRYMLNLIDHELKDFGFAIGNPLEDEKRGGHIYLEHAEAARICKALKANGVIPDFRAPNGVRLAPVALYNTYEEVWQSVMILKKIMKDEEYKQFENKREVVA.

Pyridoxal 5'-phosphate contacts are provided by residues Thr-104, Thr-105, 132-135, Asp-213, His-216, and Tyr-238; that span reads FPSD. Lys-239 carries the post-translational modification N6-(pyridoxal phosphate)lysine. Residues Trp-267 and Thr-295 each coordinate pyridoxal 5'-phosphate.

It belongs to the kynureninase family. Homodimer. The cofactor is pyridoxal 5'-phosphate.

The enzyme catalyses L-kynurenine + H2O = anthranilate + L-alanine + H(+). It catalyses the reaction 3-hydroxy-L-kynurenine + H2O = 3-hydroxyanthranilate + L-alanine + H(+). It participates in amino-acid degradation; L-kynurenine degradation; L-alanine and anthranilate from L-kynurenine: step 1/1. Its pathway is cofactor biosynthesis; NAD(+) biosynthesis; quinolinate from L-kynurenine: step 2/3. Catalyzes the cleavage of L-kynurenine (L-Kyn) and L-3-hydroxykynurenine (L-3OHKyn) into anthranilic acid (AA) and 3-hydroxyanthranilic acid (3-OHAA), respectively. The sequence is that of Kynureninase from Bacillus thuringiensis subsp. konkukian (strain 97-27).